A 269-amino-acid polypeptide reads, in one-letter code: Probable ribosomal RNA small subunit methyltransferase A (269 aa).

6 residues coordinate S-adenosyl-L-methionine: H23, L25, G50, E71, D95, and N110.

It belongs to the class I-like SAM-binding methyltransferase superfamily. rRNA adenine N(6)-methyltransferase family. RsmA subfamily.

The protein localises to the cytoplasm. In terms of biological role, specifically dimethylates two adjacent adenosines in the loop of a conserved hairpin near the 3'-end of 16S rRNA in the 30S particle. May play a critical role in biogenesis of 30S subunits. This is Probable ribosomal RNA small subunit methyltransferase A from Pyrococcus abyssi (strain GE5 / Orsay).